A 152-amino-acid chain; its full sequence is MKLILQEKVANLGNIGDQVVVKPGYARNFLLPLGKAVPATPEHIAEFEKRRAELEKAAAELLAKAKARAKKLEDKTFKITANASDEGRLFGSIGPREIAQAITEAGIEIEKREVDLSQGPIRQVGEYEVPLRLHTDVSVNVKIEVAPENSNS.

It belongs to the bacterial ribosomal protein bL9 family.

Its function is as follows. Binds to the 23S rRNA. The chain is Large ribosomal subunit protein bL9 from Coxiella burnetii (strain Dugway 5J108-111).